Reading from the N-terminus, the 309-residue chain is GTP cyclohydrolase MptA (309 aa).

It belongs to the GTP cyclohydrolase IV family. In terms of assembly, homodimer. Requires Fe(2+) as cofactor.

It carries out the reaction GTP + H2O = 7,8-dihydroneopterin 2',3'-cyclic phosphate + formate + diphosphate + H(+). It functions in the pathway cofactor biosynthesis; 5,6,7,8-tetrahydromethanopterin biosynthesis. Converts GTP to 7,8-dihydro-D-neopterin 2',3'-cyclic phosphate, the first intermediate in the biosynthesis of coenzyme methanopterin. The sequence is that of GTP cyclohydrolase MptA from Haloquadratum walsbyi (strain DSM 16790 / HBSQ001).